A 549-amino-acid chain; its full sequence is Oxygen-dependent choline dehydrogenase (549 aa).

Residue 4–33 (DFVIIGSGSAGSALAYRLSEGGKNSVIVIE) coordinates FAD. Residue His-465 is the Proton acceptor of the active site.

This sequence belongs to the GMC oxidoreductase family. Requires FAD as cofactor.

It catalyses the reaction choline + A = betaine aldehyde + AH2. The enzyme catalyses betaine aldehyde + NAD(+) + H2O = glycine betaine + NADH + 2 H(+). It functions in the pathway amine and polyamine biosynthesis; betaine biosynthesis via choline pathway; betaine aldehyde from choline (cytochrome c reductase route): step 1/1. Involved in the biosynthesis of the osmoprotectant glycine betaine. Catalyzes the oxidation of choline to betaine aldehyde and betaine aldehyde to glycine betaine at the same rate. The protein is Oxygen-dependent choline dehydrogenase of Rhizobium johnstonii (strain DSM 114642 / LMG 32736 / 3841) (Rhizobium leguminosarum bv. viciae).